Consider the following 458-residue polypeptide: tRNA-2-methylthio-N(6)-dimethylallyladenosine synthase (458 aa).

The region spanning 2-118 (PKLYIKTYGC…VFEHVDGILR (117 aa)) is the MTTase N-terminal domain. [4Fe-4S] cluster is bound by residues C11, C47, C81, C170, C174, and C177. The region spanning 156–389 (PGVRSTAYVS…LAVVNEIAIR (234 aa)) is the Radical SAM core domain. The 64-residue stretch at 392–455 (RDLVGTVQEV…GFTLYGVPCP (64 aa)) folds into the TRAM domain.

Belongs to the methylthiotransferase family. MiaB subfamily. Monomer. [4Fe-4S] cluster is required as a cofactor.

Its subcellular location is the cytoplasm. It catalyses the reaction N(6)-dimethylallyladenosine(37) in tRNA + (sulfur carrier)-SH + AH2 + 2 S-adenosyl-L-methionine = 2-methylsulfanyl-N(6)-dimethylallyladenosine(37) in tRNA + (sulfur carrier)-H + 5'-deoxyadenosine + L-methionine + A + S-adenosyl-L-homocysteine + 2 H(+). Functionally, catalyzes the methylthiolation of N6-(dimethylallyl)adenosine (i(6)A), leading to the formation of 2-methylthio-N6-(dimethylallyl)adenosine (ms(2)i(6)A) at position 37 in tRNAs that read codons beginning with uridine. The polypeptide is tRNA-2-methylthio-N(6)-dimethylallyladenosine synthase (Akkermansia muciniphila (strain ATCC BAA-835 / DSM 22959 / JCM 33894 / BCRC 81048 / CCUG 64013 / CIP 107961 / Muc)).